We begin with the raw amino-acid sequence, 251 residues long: Low molecular mass lipoprotein PBMHPC-21 (251 aa).

The first 16 residues, 1-16, serve as a signal peptide directing secretion; sequence MKFVVVFASCVLAVSA.

It belongs to the 30 kDa lipoprotein family.

The protein resides in the secreted. The polypeptide is Low molecular mass lipoprotein PBMHPC-21 (Bombyx mori (Silk moth)).